The following is a 126-amino-acid chain: Aspartate 1-decarboxylase (126 aa).

Serine 25 (schiff-base intermediate with substrate; via pyruvic acid) is an active-site residue. The residue at position 25 (serine 25) is a Pyruvic acid (Ser). Substrate is bound at residue threonine 57. Residue tyrosine 58 is the Proton donor of the active site. Residue 73–75 (GAA) participates in substrate binding.

The protein belongs to the PanD family. Heterooctamer of four alpha and four beta subunits. The cofactor is pyruvate. Is synthesized initially as an inactive proenzyme, which is activated by self-cleavage at a specific serine bond to produce a beta-subunit with a hydroxyl group at its C-terminus and an alpha-subunit with a pyruvoyl group at its N-terminus.

It localises to the cytoplasm. The catalysed reaction is L-aspartate + H(+) = beta-alanine + CO2. The protein operates within cofactor biosynthesis; (R)-pantothenate biosynthesis; beta-alanine from L-aspartate: step 1/1. In terms of biological role, catalyzes the pyruvoyl-dependent decarboxylation of aspartate to produce beta-alanine. This Methylococcus capsulatus (strain ATCC 33009 / NCIMB 11132 / Bath) protein is Aspartate 1-decarboxylase.